The following is a 154-amino-acid chain: Putative pre-16S rRNA nuclease (154 aa).

Belongs to the YqgF nuclease family.

Its subcellular location is the cytoplasm. Functionally, could be a nuclease involved in processing of the 5'-end of pre-16S rRNA. The polypeptide is Putative pre-16S rRNA nuclease (Ruegeria pomeroyi (strain ATCC 700808 / DSM 15171 / DSS-3) (Silicibacter pomeroyi)).